The chain runs to 130 residues: Small ribosomal subunit protein uS9 (130 aa).

It belongs to the universal ribosomal protein uS9 family.

This chain is Small ribosomal subunit protein uS9, found in Streptococcus equi subsp. equi (strain 4047).